Consider the following 125-residue polypeptide: Large ribosomal subunit protein bL20 (125 aa).

This sequence belongs to the bacterial ribosomal protein bL20 family.

In terms of biological role, binds directly to 23S ribosomal RNA and is necessary for the in vitro assembly process of the 50S ribosomal subunit. It is not involved in the protein synthesizing functions of that subunit. The polypeptide is Large ribosomal subunit protein bL20 (Thermobifida fusca (strain YX)).